We begin with the raw amino-acid sequence, 107 residues long: CLAVATA3/ESR (CLE)-related protein 13 (107 aa).

An N-terminal signal peptide occupies residues 1 to 25 (MATTRVSHVLGFLLWISLLIFVSIG). Asparagine 29 is a glycosylation site (N-linked (GlcNAc...) asparagine). The segment at 79-107 (ALPAGGSEIDPRYGVEKRLVPSGPNPLHH) is disordered. Over residues 87-97 (IDPRYGVEKRL) the composition is skewed to basic and acidic residues. A hydroxyproline mark is found at proline 99 and proline 102. Residue proline 102 is glycosylated (O-linked (Ara...) hydroxyproline).

Belongs to the CLV3/ESR signal peptide family. Post-translationally, the O-glycosylation (arabinosylation) of the hydroxyproline Pro-102 enhances binding affinity of the CLE13p peptide for its receptor. Mostly expressed in seedlings, roots, flowers, stems and apex, and, to a lower extent, in leaves and siliques.

The protein localises to the secreted. It localises to the extracellular space. Extracellular signal peptide that regulates cell fate. Represses root apical meristem maintenance. Regulates the transition of protophloem cells from proliferation to differentiation, thus impinging on postembryonic growth capacity of the root meristem; this signaling pathway requires CRN and CLV2. This Arabidopsis thaliana (Mouse-ear cress) protein is CLAVATA3/ESR (CLE)-related protein 13.